We begin with the raw amino-acid sequence, 267 residues long: Phosphonates import ATP-binding protein PhnC 2 (267 aa).

The ABC transporter domain maps to 3–247 (LSLDGVDLVH…ALDALYANEQ (245 aa)). Residue 36-43 (GPSGAGKT) coordinates ATP.

Belongs to the ABC transporter superfamily. Phosphonates importer (TC 3.A.1.9.1) family. In terms of assembly, the complex is composed of two ATP-binding proteins (PhnC), two transmembrane proteins (PhnE) and a solute-binding protein (PhnD).

It is found in the cell inner membrane. The enzyme catalyses phosphonate(out) + ATP + H2O = phosphonate(in) + ADP + phosphate + H(+). In terms of biological role, part of the ABC transporter complex PhnCDE involved in phosphonates import. Responsible for energy coupling to the transport system. In Pseudomonas aeruginosa (strain UCBPP-PA14), this protein is Phosphonates import ATP-binding protein PhnC 2.